The primary structure comprises 1781 residues: Signal-induced proliferation-associated 1-like protein 3 (1781 aa).

2 disordered regions span residues 45-166 (SMSQ…FLPL) and 239-332 (TELL…EASR). Low complexity predominate over residues 54 to 73 (PATATATATATTRPSPTTPA). The segment covering 87–97 (PPKREALREHS) has biased composition (basic and acidic residues). Residue Ser-100 is modified to Phosphoserine. Residues 118–135 (RSIQNGQPPTSTPASSGS) show a composition bias toward polar residues. Positions 137–146 (AFHRLSRRRS) are enriched in basic residues. Ser-146 is modified (phosphoserine). Phosphoserine is present on Ser-401. The region spanning 611 to 828 (LLKLDEQGLC…RTRQEYLKDL (218 aa)) is the Rap-GAP domain. The PDZ domain occupies 966–1042 (DMTLRRNGLG…VKVVIIPPFE (77 aa)). Disordered regions lie at residues 1046 to 1112 (PRRG…SLSR), 1124 to 1221 (ESQP…QKPE), 1236 to 1565 (AGSS…GLEP), and 1583 to 1636 (TLPA…RLDP). 2 stretches are compositionally biased toward polar residues: residues 1080–1111 (APWQWSGPASHNSLPASKWATPTTPGHAQSLS) and 1157–1166 (PSGSFSTPGS). Low complexity predominate over residues 1196–1210 (DGTSSGDSSSGGLTS). The segment covering 1245-1261 (SRQDAAGKDSPNRHSKG) has biased composition (basic and acidic residues). Residues 1266 to 1281 (SSHSSSNTLSSNASSS) are compositionally biased toward low complexity. The segment covering 1304–1322 (GGSSDSGIDTTLYTSSPSC) has biased composition (polar residues). Ser-1364 is subject to Phosphoserine. Position 1387 is a phosphothreonine (Thr-1387). A compositionally biased stretch (polar residues) spans 1425–1441 (RPSQLAQPSPFQLSASV). An N6-acetyllysine modification is found at Lys-1448. The span at 1509–1518 (TIEDDLKKLI) shows a compositional bias: basic and acidic residues. The segment covering 1532–1547 (GQSPQKGLQRTLSDES) has biased composition (polar residues). Ser-1544 and Ser-1547 each carry phosphoserine. Low complexity predominate over residues 1599-1609 (PGATPAAGSGF). Phosphoserine occurs at positions 1619 and 1622. Residues 1625 to 1635 (DGRDRPLRRLD) show a composition bias toward basic and acidic residues. Ser-1677 carries the post-translational modification Phosphoserine. The tract at residues 1685–1712 (SPVHSHLSLERGPPTPRTTPTMSEEPPL) is disordered. A phosphothreonine mark is found at Thr-1699 and Thr-1703. Positions 1720 to 1774 (QLEVMLKQLHTDLQKEKQDKVVLQSEVASLRQNNQRLQEESQAASEQLRKFAEIF) form a coiled coil.

It localises to the apical cell membrane. Functionally, plays a critical role in epithelial cell morphogenesis, polarity, adhesion and cytoskeletal organization in the lens. The chain is Signal-induced proliferation-associated 1-like protein 3 (SIPA1L3) from Homo sapiens (Human).